A 389-amino-acid polypeptide reads, in one-letter code: Capreomycidine synthase (389 aa).

Lys230 is modified (N6-(pyridoxal phosphate)lysine).

Belongs to the class-II pyridoxal-phosphate-dependent aminotransferase family. The cofactor is pyridoxal 5'-phosphate.

It catalyses the reaction (2S,3S)-hydroxyarginine = (2S,3R)-capreomycidine + H2O. The protein operates within antibiotic biosynthesis. In terms of biological role, involved in the biosynthesis of capreomycidine, an unusual amino acid used by non-ribosomal peptide synthases (NRPS) to make the tuberactinomycin class of peptide antibiotic such as viomycin and capreomycin. Catalyzes the dehydration of the C3 hydroxyl of (3S)-hydroxy-(2S)-arginine and the intramolecular cyclization to yield (2S,3R)-capreomycidine. This Streptomyces vinaceus protein is Capreomycidine synthase.